The primary structure comprises 216 residues: DNA repair and recombination protein RadB (216 aa).

Belongs to the eukaryotic RecA-like protein family. RadB subfamily.

Its function is as follows. Involved in DNA repair and in homologous recombination. May regulate the cleavage reactions of the branch-structured DNA. Has a very weak ATPase activity that is not stimulated by DNA. Binds DNA but does not promote DNA strands exchange. The polypeptide is DNA repair and recombination protein RadB (Methanococcus maripaludis (strain C5 / ATCC BAA-1333)).